The primary structure comprises 231 residues: ATP phosphoribosyltransferase (231 aa).

The protein belongs to the ATP phosphoribosyltransferase family. Short subfamily. Heteromultimer composed of HisG and HisZ subunits.

The protein resides in the cytoplasm. The enzyme catalyses 1-(5-phospho-beta-D-ribosyl)-ATP + diphosphate = 5-phospho-alpha-D-ribose 1-diphosphate + ATP. The protein operates within amino-acid biosynthesis; L-histidine biosynthesis; L-histidine from 5-phospho-alpha-D-ribose 1-diphosphate: step 1/9. Its function is as follows. Catalyzes the condensation of ATP and 5-phosphoribose 1-diphosphate to form N'-(5'-phosphoribosyl)-ATP (PR-ATP). Has a crucial role in the pathway because the rate of histidine biosynthesis seems to be controlled primarily by regulation of HisG enzymatic activity. The protein is ATP phosphoribosyltransferase of Brucella anthropi (strain ATCC 49188 / DSM 6882 / CCUG 24695 / JCM 21032 / LMG 3331 / NBRC 15819 / NCTC 12168 / Alc 37) (Ochrobactrum anthropi).